The sequence spans 1247 residues: Nitric oxide synthase (1247 aa).

Residues 13 to 33 (EVAEGRESSKANHIGEERRGY) are disordered. Residue Ser-146 participates in (6R)-L-erythro-5,6,7,8-tetrahydrobiopterin binding. A heme b-binding site is contributed by Cys-224. The L-arginine site is built by Gln-287, Trp-396, Tyr-397, Glu-401, and Asn-406. The (6R)-L-erythro-5,6,7,8-tetrahydrobiopterin site is built by Trp-487 and Phe-500. Tyr-515 is a heme b binding site. The calmodulin-binding stretch occupies residues 537 to 557 (PRRKFNFKQIARAVKFTSKLF). The 200-residue stretch at 567–766 (ATVLYATETG…AFRKWAPEVF (200 aa)) folds into the Flavodoxin-like domain. FMN is bound at residue 712–743 (VFALGSSAYPNFCAFGKYIDNILGELGGERLM). In terms of domain architecture, FAD-binding FR-type spans 795–1065 (NTVRYAPVAE…VRSAPSFHMS (271 aa)). Residues 855 to 866 (YEPGDHVGIFPA) and 998 to 1008 (LQPRFYSISSS) each bind FAD. NADP(+)-binding positions include 1073–1091 (ILIG…WQEW) and 1170–1185 (KGHI…AEHV).

Belongs to the NOS family. The cofactor is heme b. FAD serves as cofactor. It depends on FMN as a cofactor.

The enzyme catalyses 2 L-arginine + 3 NADPH + 4 O2 + H(+) = 2 L-citrulline + 2 nitric oxide + 3 NADP(+) + 4 H2O. Stimulated by calcium/calmodulin. Its function is as follows. Produces nitric oxide (NO) which is a messenger molecule with diverse functions throughout the body. Nitric oxide limits plasmodium development in the midgut. This Anopheles stephensi (Indo-Pakistan malaria mosquito) protein is Nitric oxide synthase.